The chain runs to 129 residues: D-ribose pyranase (129 aa).

The active-site Proton donor is His20. Substrate is bound by residues Asp28, His96, and 118–120 (YAN).

The protein belongs to the RbsD / FucU family. RbsD subfamily. Homodecamer.

The protein localises to the cytoplasm. It catalyses the reaction beta-D-ribopyranose = beta-D-ribofuranose. Its pathway is carbohydrate metabolism; D-ribose degradation; D-ribose 5-phosphate from beta-D-ribopyranose: step 1/2. Functionally, catalyzes the interconversion of beta-pyran and beta-furan forms of D-ribose. This Streptomyces coelicolor (strain ATCC BAA-471 / A3(2) / M145) protein is D-ribose pyranase.